The chain runs to 209 residues: Protein GrpE (209 aa).

Over residues 1–13 (MSNDSSKAKQNQV) the composition is skewed to polar residues. The segment at 1 to 27 (MSNDSSKAKQNQVDEAVEGEIITDNEN) is disordered. Residues 15 to 27 (EAVEGEIITDNEN) show a composition bias toward acidic residues.

The protein belongs to the GrpE family. Homodimer.

The protein localises to the cytoplasm. Its function is as follows. Participates actively in the response to hyperosmotic and heat shock by preventing the aggregation of stress-denatured proteins, in association with DnaK and GrpE. It is the nucleotide exchange factor for DnaK and may function as a thermosensor. Unfolded proteins bind initially to DnaJ; upon interaction with the DnaJ-bound protein, DnaK hydrolyzes its bound ATP, resulting in the formation of a stable complex. GrpE releases ADP from DnaK; ATP binding to DnaK triggers the release of the substrate protein, thus completing the reaction cycle. Several rounds of ATP-dependent interactions between DnaJ, DnaK and GrpE are required for fully efficient folding. The chain is Protein GrpE from Shewanella sediminis (strain HAW-EB3).